The chain runs to 427 residues: Glutamate-1-semialdehyde 2,1-aminomutase (427 aa).

K265 is subject to N6-(pyridoxal phosphate)lysine.

The protein belongs to the class-III pyridoxal-phosphate-dependent aminotransferase family. HemL subfamily. Homodimer. The cofactor is pyridoxal 5'-phosphate.

The protein localises to the cytoplasm. It carries out the reaction (S)-4-amino-5-oxopentanoate = 5-aminolevulinate. It participates in porphyrin-containing compound metabolism; protoporphyrin-IX biosynthesis; 5-aminolevulinate from L-glutamyl-tRNA(Glu): step 2/2. The protein is Glutamate-1-semialdehyde 2,1-aminomutase of Pseudomonas putida (strain ATCC 47054 / DSM 6125 / CFBP 8728 / NCIMB 11950 / KT2440).